We begin with the raw amino-acid sequence, 66 residues long: Large ribosomal subunit protein uL29 (66 aa).

This sequence belongs to the universal ribosomal protein uL29 family.

This Syntrophobacter fumaroxidans (strain DSM 10017 / MPOB) protein is Large ribosomal subunit protein uL29.